Here is a 76-residue protein sequence, read N- to C-terminus: Exodeoxyribonuclease 7 small subunit (76 aa).

It belongs to the XseB family. Heterooligomer composed of large and small subunits.

Its subcellular location is the cytoplasm. The catalysed reaction is Exonucleolytic cleavage in either 5'- to 3'- or 3'- to 5'-direction to yield nucleoside 5'-phosphates.. Functionally, bidirectionally degrades single-stranded DNA into large acid-insoluble oligonucleotides, which are then degraded further into small acid-soluble oligonucleotides. The sequence is that of Exodeoxyribonuclease 7 small subunit from Geobacillus thermodenitrificans (strain NG80-2).